The primary structure comprises 332 residues: Adenosine receptor A2b (332 aa).

Residues 1-8 (MLLETQDA) are Extracellular-facing. Residues 9-33 (LYVALELVIAALSVAGNVLVCAAVG) traverse the membrane as a helical segment. The Cytoplasmic segment spans residues 34–43 (TANTLQTPTN). Residues 44–67 (YFLVSLAAADVAVGLFAIPFAITI) traverse the membrane as a helical segment. The Extracellular portion of the chain corresponds to 68-78 (SLGFCTDFYGC). A disulfide bridge connects residues cysteine 78 and cysteine 171. A helical transmembrane segment spans residues 79-101 (LFLACFVLVLTQSSIFSLLAVAV). The Cytoplasmic portion of the chain corresponds to 102–121 (DRYLAICVPLRYKSLVTGTR). The chain crosses the membrane as a helical span at residues 122–144 (ARGVIAVLWVLAFGIGLTPFLGW). Over 145-178 (NSKDSATNNCTEPWDGTTNESCCLVKCLFENVVP) the chain is Extracellular. Asparagine 153 and asparagine 163 each carry an N-linked (GlcNAc...) asparagine glycan. An adenosine-binding site is contributed by glutamate 174. Residues 179-203 (MSYMVYFNFFGCVLPPLLIMLVIYI) traverse the membrane as a helical segment. Over 204–235 (KIFLVACRQLQRTELMDHSRTTLQREIHAAKS) the chain is Cytoplasmic. Residues 236–259 (LAMIVGIFALCWLPVHAVNCVTLF) traverse the membrane as a helical segment. Asparagine 254 contributes to the adenosine binding site. Over 260-267 (QPAQGKNK) the chain is Extracellular. The chain crosses the membrane as a helical span at residues 268-291 (PKWAMNMAILLSHANSVVNPIVYA). Positions 279 and 280 each coordinate adenosine. Over 292-332 (YRNRDFRYTFHKIISRYLLCQADVKSGNGQAGVQPALGVGL) the chain is Cytoplasmic. Cysteine 311 is lipidated: S-palmitoyl cysteine.

It belongs to the G-protein coupled receptor 1 family.

It localises to the cell membrane. Functionally, receptor for adenosine. The activity of this receptor is mediated by G proteins which activate adenylyl cyclase. In Homo sapiens (Human), this protein is Adenosine receptor A2b (ADORA2B).